A 235-amino-acid polypeptide reads, in one-letter code: Lipoprotein signal peptidase (235 aa).

Positions 1-23 (MTDETSGPAEPVTDAPGDAESPA) are disordered. The next 3 helical transmembrane spans lie at 31–51 (LLLT…VLAV), 84–104 (GYTW…IWMG), and 108–128 (VSPW…GNLV). Catalysis depends on residues aspartate 144 and aspartate 158. Residues 156–176 (VADPSVVGGAILLVALSLFGF) form a helical membrane-spanning segment. The segment at 185-235 (RPGEDAEPSAGASDSTPEAPAADGPDKPAGPVGPEDAAEESKTVGHQAEPS) is disordered. Positions 201-218 (PEAPAADGPDKPAGPVGP) are enriched in low complexity.

It belongs to the peptidase A8 family.

The protein localises to the cell membrane. It carries out the reaction Release of signal peptides from bacterial membrane prolipoproteins. Hydrolyzes -Xaa-Yaa-Zaa-|-(S,diacylglyceryl)Cys-, in which Xaa is hydrophobic (preferably Leu), and Yaa (Ala or Ser) and Zaa (Gly or Ala) have small, neutral side chains.. It participates in protein modification; lipoprotein biosynthesis (signal peptide cleavage). Its function is as follows. This protein specifically catalyzes the removal of signal peptides from prolipoproteins. The protein is Lipoprotein signal peptidase of Mycolicibacterium smegmatis (strain ATCC 700084 / mc(2)155) (Mycobacterium smegmatis).